Reading from the N-terminus, the 359-residue chain is Quinolinate synthase (359 aa).

Positions 81 and 99 each coordinate iminosuccinate. Residue cysteine 144 coordinates [4Fe-4S] cluster. Residues 170–172 (YVN) and serine 187 contribute to the iminosuccinate site. Position 229 (cysteine 229) interacts with [4Fe-4S] cluster. Residues 255–257 (HPE) and threonine 272 contribute to the iminosuccinate site. Cysteine 315 serves as a coordination point for [4Fe-4S] cluster.

It belongs to the quinolinate synthase family. Type 2 subfamily. It depends on [4Fe-4S] cluster as a cofactor.

Its subcellular location is the cytoplasm. It carries out the reaction iminosuccinate + dihydroxyacetone phosphate = quinolinate + phosphate + 2 H2O + H(+). Its pathway is cofactor biosynthesis; NAD(+) biosynthesis; quinolinate from iminoaspartate: step 1/1. Its function is as follows. Catalyzes the condensation of iminoaspartate with dihydroxyacetone phosphate to form quinolinate. The polypeptide is Quinolinate synthase (Sinorhizobium fredii (strain NBRC 101917 / NGR234)).